The primary structure comprises 443 residues: Adenylyltransferase and sulfurtransferase UBA4 (443 aa).

Residues Gly-81, Asp-102, 109–113, Lys-126, and 170–171 contribute to the ATP site; these read SNLHR and DS. Zn(2+) is bound by residues Cys-212 and Cys-215. Cys-229 serves as the catalytic Glycyl thioester intermediate; for adenylyltransferase activity. Residues Cys-290 and Cys-293 each coordinate Zn(2+). Residues 342 to 441 enclose the Rhodanese domain; the sequence is KERGFVCLDV…YIDEINPSLP (100 aa). The active-site Cysteine persulfide intermediate; for sulfurtransferase activity is the Cys-400.

This sequence in the N-terminal section; belongs to the HesA/MoeB/ThiF family. UBA4 subfamily. Zn(2+) serves as cofactor.

The protein resides in the cytoplasm. It is found in the cytosol. It participates in tRNA modification; 5-methoxycarbonylmethyl-2-thiouridine-tRNA biosynthesis. Plays a central role in 2-thiolation of mcm(5)S(2)U at tRNA wobble positions of cytosolic tRNA(Lys), tRNA(Glu) and tRNA(Gln). Acts by mediating the C-terminal thiocarboxylation of sulfur carrier URM1. Its N-terminus first activates URM1 as acyl-adenylate (-COAMP), then the persulfide sulfur on the catalytic cysteine is transferred to URM1 to form thiocarboxylation (-COSH) of its C-terminus. The reaction probably involves hydrogen sulfide that is generated from the persulfide intermediate and that acts as a nucleophile towards URM1. Subsequently, a transient disulfide bond is formed. Does not use thiosulfate as sulfur donor; NFS1 probably acting as a sulfur donor for thiocarboxylation reactions. Prior mcm(5) tRNA modification by the elongator complex is required for 2-thiolation. May also be involved in protein urmylation. In Eremothecium gossypii (strain ATCC 10895 / CBS 109.51 / FGSC 9923 / NRRL Y-1056) (Yeast), this protein is Adenylyltransferase and sulfurtransferase UBA4.